The chain runs to 269 residues: 2-keto-4-pentenoate hydratase (269 aa).

It belongs to the hydratase/decarboxylase family. MhpD subfamily. A divalent metal cation serves as cofactor.

It carries out the reaction (S)-4-hydroxy-2-oxopentanoate = (2Z)-2-hydroxypenta-2,4-dienoate + H2O. Its pathway is aromatic compound metabolism; 3-phenylpropanoate degradation. In terms of biological role, catalyzes the conversion of 2-hydroxypentadienoic acid (enolic form of 2-oxopent-4-enoate) to 4-hydroxy-2-ketopentanoic acid. The chain is 2-keto-4-pentenoate hydratase from Paraburkholderia xenovorans (strain LB400).